Consider the following 154-residue polypeptide: Small ribosomal subunit protein uS9 (154 aa).

Disordered stretches follow at residues 1–33 and 115–154; these read MVPP…SGLG and PENN…YSKR. The span at 135-154 shows a compositional bias: basic residues; it reads KERKKAGLKKARKAPQYSKR.

The protein belongs to the universal ribosomal protein uS9 family.

The sequence is that of Small ribosomal subunit protein uS9 from Tropheryma whipplei (strain TW08/27) (Whipple's bacillus).